The sequence spans 157 residues: Immediate-early protein ICP-18 (157 aa).

The protein is Immediate-early protein ICP-18 of Frog virus 3 (isolate Goorha) (FV-3).